Reading from the N-terminus, the 264-residue chain is MKIEAVIFDWAGTTVDYGCFAPLEVFMKIFHKRGVEITVEEARKPMGLLKIDHVRALTEMPRIADEWKRVFGQLPTEVDIHEMYEEFEEILFSILPSYATPIEGVKEVIASLRERGIKIGSTTGYTREMMDIVAKEAALQGYKPDFLVTPDDVPAGRPYPWMCYKNAMELDVYPMNHMIKVGDTVSDMKEGRNAGMWTVGVILGSSELGLTEEEVESMDSVELREKIEVVRNRFVENGAHFTIETMQELENIIEHIEKQELIIS.

The Nucleophile role is filled by D9. Mg(2+) contacts are provided by D9 and A11. Residue K50 is the Schiff-base intermediate with substrate of the active site. D183 is a binding site for Mg(2+).

The protein belongs to the HAD-like hydrolase superfamily. PhnX family. Homodimer. The cofactor is Mg(2+).

It carries out the reaction phosphonoacetaldehyde + H2O = acetaldehyde + phosphate + H(+). In terms of biological role, involved in phosphonate degradation. This is Phosphonoacetaldehyde hydrolase from Bacillus cereus (strain G9842).